The primary structure comprises 228 residues: Small ribosomal subunit protein uS7A (228 aa).

The protein belongs to the universal ribosomal protein uS7 family.

The chain is Small ribosomal subunit protein uS7A (RpS5a) from Drosophila melanogaster (Fruit fly).